We begin with the raw amino-acid sequence, 922 residues long: Lacticin 481/lactococcin biosynthesis protein LcnDR2 (922 aa).

In terms of biological role, could be implicated in the processing or the export process of the lantibiotic lacticin 481/lactococcin DR. The protein is Lacticin 481/lactococcin biosynthesis protein LcnDR2 (lcnDR2) of Lactococcus lactis subsp. lactis (Streptococcus lactis).